Consider the following 288-residue polypeptide: Bifunctional protein FolD 2 (288 aa).

Residues glycine 166 to serine 168 and serine 191 each bind NADP(+).

The protein belongs to the tetrahydrofolate dehydrogenase/cyclohydrolase family. Homodimer.

It catalyses the reaction (6R)-5,10-methylene-5,6,7,8-tetrahydrofolate + NADP(+) = (6R)-5,10-methenyltetrahydrofolate + NADPH. The catalysed reaction is (6R)-5,10-methenyltetrahydrofolate + H2O = (6R)-10-formyltetrahydrofolate + H(+). It participates in one-carbon metabolism; tetrahydrofolate interconversion. Its function is as follows. Catalyzes the oxidation of 5,10-methylenetetrahydrofolate to 5,10-methenyltetrahydrofolate and then the hydrolysis of 5,10-methenyltetrahydrofolate to 10-formyltetrahydrofolate. This Myxococcus xanthus (strain DK1622) protein is Bifunctional protein FolD 2.